Here is a 483-residue protein sequence, read N- to C-terminus: Replication factor C large subunit (483 aa).

Gly43–Thr50 serves as a coordination point for ATP. Over residues Glu417–Ile442 the composition is skewed to basic and acidic residues. A disordered region spans residues Glu417 to Phe483. The segment covering Ser448 to Pro457 has biased composition (polar residues).

Belongs to the activator 1 small subunits family. RfcL subfamily. As to quaternary structure, heteromultimer composed of small subunits (RfcS) and large subunits (RfcL).

Part of the RFC clamp loader complex which loads the PCNA sliding clamp onto DNA. The chain is Replication factor C large subunit from Methanospirillum hungatei JF-1 (strain ATCC 27890 / DSM 864 / NBRC 100397 / JF-1).